A 555-amino-acid chain; its full sequence is Potassium-transporting ATPase potassium-binding subunit (555 aa).

The next 10 membrane-spanning stretches (helical) occupy residues 2-22 (IWVAVVITMLLFILVAKPTGI), 60-80 (QYALSLVLLNGFMIVVVYFIF), 130-150 (IGITFLMFAAPATTLALVMAF), 173-193 (VFLPIAFMAALVFVALGVPQT), 246-266 (MSNILQMMLMMLLPTALPFTY), 278-298 (ILFVSLFMVFLLGFITITTSE), 374-394 (AGFVNIIMYAIIAVFISGLMV), 412-432 (LIAVTILFHPLLILGFSALAL), 483-503 (LVMFLGRYFSLITMLAVAASL), and 525-545 (GIFIGTIVIVGALTFFPMLVL).

The protein belongs to the KdpA family. The system is composed of three essential subunits: KdpA, KdpB and KdpC.

The protein localises to the cell membrane. Its function is as follows. Part of the high-affinity ATP-driven potassium transport (or Kdp) system, which catalyzes the hydrolysis of ATP coupled with the electrogenic transport of potassium into the cytoplasm. This subunit binds the extracellular potassium ions and delivers the ions to the membrane domain of KdpB through an intramembrane tunnel. The sequence is that of Potassium-transporting ATPase potassium-binding subunit from Bacillus thuringiensis (strain Al Hakam).